The following is a 37-amino-acid chain: Dolichyl-diphosphooligosaccharide--protein glycosyltransferase subunit 4B (37 aa).

The Lumenal segment spans residues 1 to 8; sequence MFDDQDLG. Residues 9–29 traverse the membrane as a helical segment; the sequence is FFANFLGIFIFVLVMAYHFVM. Residues 30 to 37 lie on the Cytoplasmic side of the membrane; the sequence is ADVKYEGN.

This sequence belongs to the OST4 family. Component of the oligosaccharyltransferase (OST) complex.

The protein localises to the endoplasmic reticulum membrane. In terms of biological role, subunit of the oligosaccharyl transferase (OST) complex that catalyzes the initial transfer of a defined glycan (Glc(3)Man(9)GlcNAc(2) in eukaryotes) from the lipid carrier dolichol-pyrophosphate to an asparagine residue within an Asn-X-Ser/Thr consensus motif in nascent polypeptide chains, the first step in protein N-glycosylation. N-glycosylation occurs cotranslationally and the complex associates with the Sec61 complex at the channel-forming translocon complex that mediates protein translocation across the endoplasmic reticulum (ER). All subunits are required for a maximal enzyme activity. The chain is Dolichyl-diphosphooligosaccharide--protein glycosyltransferase subunit 4B (OST4B) from Oryza sativa subsp. japonica (Rice).